Here is a 678-residue protein sequence, read N- to C-terminus: Translation initiation factor eIF2B subunit epsilon (678 aa).

At Thr172 the chain carries Phosphothreonine. The disordered stretch occupies residues 467–489 (STNELHLSDSESSETSSSSEEDM). Ser500 bears the Phosphoserine mark. Position 503 is a phosphothreonine (Thr503). Ser506 is modified (phosphoserine). The W2 domain maps to 508 to 674 (DFDEGDFNKE…NTAESESESE (167 aa)).

The protein belongs to the eIF-2B gamma/epsilon subunits family. In terms of assembly, component of the translation initiation factor 2B (eIF2B) complex which is a heterodecamer of two sets of five different subunits: alpha, beta, gamma, delta and epsilon. Subunits alpha, beta and delta comprise a regulatory subcomplex and subunits epsilon and gamma comprise a catalytic subcomplex. Within the complex, the hexameric regulatory complex resides at the center, with the two heterodimeric catalytic subcomplexes bound on opposite sides.

The protein resides in the cytoplasm. Its subcellular location is the cytosol. In terms of biological role, acts as a component of the translation initiation factor 2B (eIF2B) complex, which catalyzes the exchange of GDP for GTP on the eukaryotic initiation factor 2 (eIF2) complex gamma subunit. Its guanine nucleotide exchange factor activity is repressed when bound to eIF2 complex phosphorylated on the alpha subunit, thereby limiting the amount of methionyl-initiator methionine tRNA available to the ribosome and consequently global translation is repressed. This Schizosaccharomyces pombe (strain 972 / ATCC 24843) (Fission yeast) protein is Translation initiation factor eIF2B subunit epsilon (tif225).